Here is a 108-residue protein sequence, read N- to C-terminus: MTEQNHILDAVYGVILARKATQTENSYTASLMRKGLDSVLKKVGEEATELVIAGKGGVADEVVYEAADLFFHTLLLLSYQDIPLERVYTELRRRFGISGIDEKNSRTT.

It belongs to the PRA-PH family.

The protein resides in the cytoplasm. It carries out the reaction 1-(5-phospho-beta-D-ribosyl)-ATP + H2O = 1-(5-phospho-beta-D-ribosyl)-5'-AMP + diphosphate + H(+). The protein operates within amino-acid biosynthesis; L-histidine biosynthesis; L-histidine from 5-phospho-alpha-D-ribose 1-diphosphate: step 2/9. This chain is Phosphoribosyl-ATP pyrophosphatase, found in Pelobacter propionicus (strain DSM 2379 / NBRC 103807 / OttBd1).